The sequence spans 98 residues: Lipolysis-activating peptide 1-alpha chain (98 aa).

An N-terminal signal peptide occupies residues 1-22 (MMKFVLFGMIVILFSLMGSIRG). The LCN-type CS-alpha/beta domain occupies 26–89 (PGNYPTNAYG…IWNAVKNHCT (64 aa)). 3 disulfide bridges follow: Cys-40–Cys-63, Cys-49–Cys-68, and Cys-53–Cys-70. Asn-96 is subject to Asparagine amide.

It belongs to the long (3 C-C) scorpion toxin superfamily. As to quaternary structure, monomer (edited version) and heterodimer (non-edited version) of this alpha chain and a beta chain (AC Q95P90). As to expression, expressed by the venom gland.

Its subcellular location is the secreted. The heterodimer non-edited LVP1 induces lipolysis in rat adipocytes. Induction of lipolysis by LVP1 appears to be mediated through the beta-2 adrenergic receptor pathway (ADRB2). In terms of biological role, the edited BmKBTx, similar to beta-toxins, may modulate voltage-gated sodium channels (Nav) and may block voltage-gated potassium channels (Kv). Seems to be a rare component in the venom. The protein is Lipolysis-activating peptide 1-alpha chain (LVP1a) of Olivierus martensii (Manchurian scorpion).